Consider the following 237-residue polypeptide: Ribonuclease 3 (237 aa).

In terms of domain architecture, RNase III spans 4 to 130; that stretch reads IQILFQTLNI…LFGAIYLDLG (127 aa). Glutamate 45 provides a ligand contact to Mg(2+). Aspartate 49 is a catalytic residue. Mg(2+) contacts are provided by aspartate 116 and glutamate 119. Glutamate 119 is a catalytic residue. The DRBM domain maps to 154–222; the sequence is DFKTQLQEIV…AQQALSKVAK (69 aa).

It belongs to the ribonuclease III family. In terms of assembly, homodimer. Mg(2+) is required as a cofactor.

Its subcellular location is the cytoplasm. The catalysed reaction is Endonucleolytic cleavage to 5'-phosphomonoester.. In terms of biological role, digests double-stranded RNA. Involved in the processing of primary rRNA transcript to yield the immediate precursors to the large and small rRNAs (23S and 16S). Processes some mRNAs, and tRNAs when they are encoded in the rRNA operon. Processes pre-crRNA and tracrRNA of type II CRISPR loci if present in the organism. In Aster yellows witches'-broom phytoplasma (strain AYWB), this protein is Ribonuclease 3.